A 302-amino-acid polypeptide reads, in one-letter code: Probable WRKY transcription factor 40 (302 aa).

The WRKY DNA-binding region spans 140 to 206 (DTTLVVKDGY…YEGEHNHPMP (67 aa)).

Belongs to the WRKY group III family.

The protein resides in the nucleus. Functionally, transcription factor. Interacts specifically with the W box (5'-(T)TGAC[CT]-3'), a frequently occurring elicitor-responsive cis-acting element. The sequence is that of Probable WRKY transcription factor 40 from Arabidopsis thaliana (Mouse-ear cress).